Reading from the N-terminus, the 197-residue chain is MFEYLNGKLVKISPTNIVIDLSGIGYLISVANPYAWSALMNTEVKIYVHQVIREDAHSLYGFVNESEKALFLRLISVSGIGPKSALAIIAAADNEGLINAIDNSDIKYLTKFPGVGKKTAMQMVLDLAGKFDATGAVGISLLDAAPAGNLALEEAIEALQALGYKATELKKIEKKLEQEAGLTSEEYIKSALKLMMK.

Positions 1 to 63 (MFEYLNGKLV…EDAHSLYGFV (63 aa)) are domain I. The segment at 64-142 (NESEKALFLR…ATGAVGISLL (79 aa)) is domain II. The flexible linker stretch occupies residues 142–146 (LDAAP). A domain III region spans residues 147-197 (AGNLALEEAIEALQALGYKATELKKIEKKLEQEAGLTSEEYIKSALKLMMK).

This sequence belongs to the RuvA family. As to quaternary structure, homotetramer. Forms an RuvA(8)-RuvB(12)-Holliday junction (HJ) complex. HJ DNA is sandwiched between 2 RuvA tetramers; dsDNA enters through RuvA and exits via RuvB. An RuvB hexamer assembles on each DNA strand where it exits the tetramer. Each RuvB hexamer is contacted by two RuvA subunits (via domain III) on 2 adjacent RuvB subunits; this complex drives branch migration. In the full resolvosome a probable DNA-RuvA(4)-RuvB(12)-RuvC(2) complex forms which resolves the HJ.

It localises to the cytoplasm. Its function is as follows. The RuvA-RuvB-RuvC complex processes Holliday junction (HJ) DNA during genetic recombination and DNA repair, while the RuvA-RuvB complex plays an important role in the rescue of blocked DNA replication forks via replication fork reversal (RFR). RuvA specifically binds to HJ cruciform DNA, conferring on it an open structure. The RuvB hexamer acts as an ATP-dependent pump, pulling dsDNA into and through the RuvAB complex. HJ branch migration allows RuvC to scan DNA until it finds its consensus sequence, where it cleaves and resolves the cruciform DNA. The sequence is that of Holliday junction branch migration complex subunit RuvA from Lactococcus lactis subsp. cremoris (strain SK11).